The following is a 132-amino-acid chain: Transmembrane protein C1orf162 homolog (132 aa).

A helical membrane pass occupies residues 36–56; it reads IILAFFAGVLLTLLIVALIFL. The tract at residues 95 to 132 is disordered; that stretch reads TFKPPEENSNDLTRNHSSGLEPTIYSQIKVTDSDLPLP. Residues 104-124 are compositionally biased toward polar residues; it reads NDLTRNHSSGLEPTIYSQIKV. Ser-111 bears the Phosphoserine mark.

It is found in the membrane. This Mus musculus (Mouse) protein is Transmembrane protein C1orf162 homolog.